The chain runs to 750 residues: Photosystem I P700 chlorophyll a apoprotein A1 (750 aa).

Helical transmembrane passes span Val-70–Ala-93, Leu-156–His-179, Leu-195–Leu-219, Ile-291–Tyr-309, Trp-346–Tyr-369, Leu-385–Val-411, Ala-433–His-455, and Phe-531–Leu-549. [4Fe-4S] cluster contacts are provided by Cys-573 and Cys-582. The next 2 membrane-spanning stretches (helical) occupy residues His-589–Trp-610 and Leu-664–Phe-686. Position 675 (His-675) interacts with chlorophyll a'. 2 residues coordinate chlorophyll a: Met-683 and Tyr-691. Trp-692 contacts phylloquinone. A helical transmembrane segment spans residues Ala-724–Ala-744.

Belongs to the PsaA/PsaB family. In terms of assembly, the PsaA/B heterodimer binds the P700 chlorophyll special pair and subsequent electron acceptors. PSI consists of a core antenna complex that captures photons, and an electron transfer chain that converts photonic excitation into a charge separation. The eukaryotic PSI reaction center is composed of at least 11 subunits. P700 is a chlorophyll a/chlorophyll a' dimer, A0 is one or more chlorophyll a, A1 is one or both phylloquinones and FX is a shared 4Fe-4S iron-sulfur center. is required as a cofactor.

It localises to the plastid. Its subcellular location is the chloroplast thylakoid membrane. It carries out the reaction reduced [plastocyanin] + hnu + oxidized [2Fe-2S]-[ferredoxin] = oxidized [plastocyanin] + reduced [2Fe-2S]-[ferredoxin]. In terms of biological role, psaA and PsaB bind P700, the primary electron donor of photosystem I (PSI), as well as the electron acceptors A0, A1 and FX. PSI is a plastocyanin-ferredoxin oxidoreductase, converting photonic excitation into a charge separation, which transfers an electron from the donor P700 chlorophyll pair to the spectroscopically characterized acceptors A0, A1, FX, FA and FB in turn. Oxidized P700 is reduced on the lumenal side of the thylakoid membrane by plastocyanin. This Daucus carota (Wild carrot) protein is Photosystem I P700 chlorophyll a apoprotein A1.